The chain runs to 232 residues: Fibrillarin-like rRNA/tRNA 2'-O-methyltransferase (232 aa).

Residues 87–88 (TT), 105–106 (EF), 130–131 (DA), and 150–153 (DVAQ) contribute to the S-adenosyl-L-methionine site.

It belongs to the methyltransferase superfamily. Fibrillarin family. In terms of assembly, interacts with nop5. Component of box C/D small ribonucleoprotein (sRNP) particles that contain rpl7ae, FlpA and nop5, plus a guide RNA.

Involved in pre-rRNA and tRNA processing. Utilizes the methyl donor S-adenosyl-L-methionine to catalyze the site-specific 2'-hydroxyl methylation of ribose moieties in rRNA and tRNA. Site specificity is provided by a guide RNA that base pairs with the substrate. Methylation occurs at a characteristic distance from the sequence involved in base pairing with the guide RNA. This is Fibrillarin-like rRNA/tRNA 2'-O-methyltransferase from Methanococcus maripaludis (strain C7 / ATCC BAA-1331).